A 359-amino-acid polypeptide reads, in one-letter code: tRNA-specific 2-thiouridylase MnmA (359 aa).

ATP is bound by residues 6–13 (AMSGGVDS) and Leu32. The active-site Nucleophile is Cys101. Cys101 and Cys193 are disulfide-bonded. Residue Gly125 coordinates ATP. The interaction with tRNA stretch occupies residues 143-145 (KDQ). Cys193 (cysteine persulfide intermediate) is an active-site residue.

The protein belongs to the MnmA/TRMU family.

Its subcellular location is the cytoplasm. The catalysed reaction is S-sulfanyl-L-cysteinyl-[protein] + uridine(34) in tRNA + AH2 + ATP = 2-thiouridine(34) in tRNA + L-cysteinyl-[protein] + A + AMP + diphosphate + H(+). Functionally, catalyzes the 2-thiolation of uridine at the wobble position (U34) of tRNA, leading to the formation of s(2)U34. The sequence is that of tRNA-specific 2-thiouridylase MnmA from Mycobacterium sp. (strain JLS).